The sequence spans 119 residues: Large ribosomal subunit protein uL18 (119 aa).

The disordered stretch occupies residues 1–24 (MITKQDKNQVRKKRHARVRSKISG). Basic residues predominate over residues 10-20 (VRKKRHARVRS).

This sequence belongs to the universal ribosomal protein uL18 family. Part of the 50S ribosomal subunit; part of the 5S rRNA/L5/L18/L25 subcomplex. Contacts the 5S and 23S rRNAs.

Its function is as follows. This is one of the proteins that bind and probably mediate the attachment of the 5S RNA into the large ribosomal subunit, where it forms part of the central protuberance. This Lysinibacillus sphaericus (strain C3-41) protein is Large ribosomal subunit protein uL18.